The sequence spans 119 residues: Large ribosomal subunit protein bL20 (119 aa).

The protein belongs to the bacterial ribosomal protein bL20 family.

In terms of biological role, binds directly to 23S ribosomal RNA and is necessary for the in vitro assembly process of the 50S ribosomal subunit. It is not involved in the protein synthesizing functions of that subunit. In Caldicellulosiruptor bescii (strain ATCC BAA-1888 / DSM 6725 / KCTC 15123 / Z-1320) (Anaerocellum thermophilum), this protein is Large ribosomal subunit protein bL20.